Here is a 396-residue protein sequence, read N- to C-terminus: Tryptophan synthase beta chain (396 aa).

An N6-(pyridoxal phosphate)lysine modification is found at Lys96.

This sequence belongs to the TrpB family. Tetramer of two alpha and two beta chains. Pyridoxal 5'-phosphate serves as cofactor.

The enzyme catalyses (1S,2R)-1-C-(indol-3-yl)glycerol 3-phosphate + L-serine = D-glyceraldehyde 3-phosphate + L-tryptophan + H2O. It functions in the pathway amino-acid biosynthesis; L-tryptophan biosynthesis; L-tryptophan from chorismate: step 5/5. The beta subunit is responsible for the synthesis of L-tryptophan from indole and L-serine. The protein is Tryptophan synthase beta chain of Azobacteroides pseudotrichonymphae genomovar. CFP2.